A 447-amino-acid chain; its full sequence is UDP-glycosyltransferase 79B9 (447 aa).

Residues S260, 319–321 (VQQ), 336–344 (HCGFGSMWE), and 358–361 (LCDQ) each bind UDP-alpha-D-glucose.

The protein belongs to the UDP-glycosyltransferase family.

This chain is UDP-glycosyltransferase 79B9 (UGT79B9), found in Arabidopsis thaliana (Mouse-ear cress).